Reading from the N-terminus, the 380-residue chain is Cystathionine beta-lyase (380 aa).

An N6-(pyridoxal phosphate)lysine modification is found at K196.

This sequence belongs to the trans-sulfuration enzymes family. Requires pyridoxal 5'-phosphate as cofactor.

It is found in the cytoplasm. It carries out the reaction L,L-cystathionine + H2O = L-homocysteine + pyruvate + NH4(+). The catalysed reaction is an S-substituted L-cysteine + H2O = a thiol + pyruvate + NH4(+). The protein operates within amino-acid biosynthesis; L-methionine biosynthesis via de novo pathway; L-homocysteine from L-cystathionine: step 1/1. Functionally, the enzymatic degradation of amino acids in cheese is believed to generate aroma compounds and therefore to be essential for flavor development. Cystathionine beta-lyase (CBL) can convert cystathionine to homocysteine but is also able to catalyze an alpha, gamma elimination. With methionine as a substrate, it produces volatile sulfur compounds which are important for flavor formation in Gouda cheese. This Lactococcus lactis subsp. lactis (strain IL1403) (Streptococcus lactis) protein is Cystathionine beta-lyase (metC).